The primary structure comprises 158 residues: Protein E6 (158 aa).

2 zinc fingers span residues 32–68 (CVYC…CQKC) and 105–141 (CMSC…CRHC). Residues 156–158 (TQV) carry the PDZ-binding domain motif.

The protein belongs to the papillomaviridae E6 protein family. In terms of assembly, forms homodimers. Interacts with ubiquitin-protein ligase UBE3A/E6-AP and thus forms a complex with human TP53. Interacts with human NFX1 and MAGI3. Interacts with human IRF3; this interaction inhibits the establishment of antiviral state. Interacts with human TYK2; this interaction inhibits JAK-STAT activation by interferon alpha. Interacts with host DLG1; this interaction leads to the proteasomal degradation of DLG1.

It is found in the host cytoplasm. The protein resides in the host nucleus. Functionally, plays a major role in the induction and maintenance of cellular transformation. Acts mainly as an oncoprotein by stimulating the destruction of many host cell key regulatory proteins. E6 associates with host UBE3A/E6-AP ubiquitin-protein ligase, and inactivates tumor suppressors TP53 and TP73 by targeting them to the 26S proteasome for degradation. In turn, DNA damage and chromosomal instabilities increase and lead to cell proliferation and cancer development. The complex E6/E6AP targets several other substrates to degradation via the proteasome including host DLG1 or NFX1, a repressor of human telomerase reverse transcriptase (hTERT). The resulting increased expression of hTERT prevents the shortening of telomere length leading to cell immortalization. Other cellular targets including BAK1, Fas-associated death domain-containing protein (FADD) and procaspase 8, are degraded by E6/E6AP causing inhibition of apoptosis. E6 also inhibits immune response by interacting with host IRF3 and TYK2. These interactions prevent IRF3 transcriptional activities and inhibit TYK2-mediated JAK-STAT activation by interferon alpha resulting in inhibition of the interferon signaling pathway. The polypeptide is Protein E6 (Homo sapiens (Human)).